The following is a 1330-amino-acid chain: Pre-mRNA-splicing factor CWC22 homolog (1330 aa).

The tract at residues 1–377 is disordered; it reads MGESDAESDS…AAKITERQRK (377 aa). Residues 9 to 36 are compositionally biased toward low complexity; sequence DSSSNSSSSDTSSGSDSDARSESSSSES. Basic and acidic residues predominate over residues 46 to 94; sequence QEESAKDAKKTDDTDRGEKRAKERDAGQDEQPTEQKKTPAAEPRSERQH. Residues 99–113 are compositionally biased toward low complexity; sequence AGVEKQQEEAVAAAE. Residues 115–135 are compositionally biased toward basic and acidic residues; the sequence is ESEKLNEAKKVETPVQRKEEA. The span at 138–148 shows a compositional bias: polar residues; that stretch reads SSVTKELNSPK. Over residues 149-166 the composition is skewed to basic and acidic residues; sequence AQEENAARELEERRKDEE. Residues 168–177 are compositionally biased toward polar residues; the sequence is PVTTNGSSKE. Phosphothreonine is present on residues Thr-191 and Thr-201. Basic and acidic residues-rich tracts occupy residues 191–201 and 208–236; these read TADHIEEGEIT and LPTK…SPDG. A phosphoserine mark is found at Ser-219 and Ser-221. Positions 252-277 are enriched in basic residues; it reads SRRRRRSRSKGSRTRSRSKSPIRRRS. Composition is skewed to basic and acidic residues over residues 278-307 and 316-325; these read NSLE…EREK and SSRRRDDSRE. Over residues 355–366 the composition is skewed to low complexity; sequence TETNADNETVTE. The 184-residue stretch at 420-603 folds into the MIF4G domain; that stretch reads KKSIHGYINK…EVLFQIRKDG (184 aa). Residues 660-697 are disordered; it reads REILGSDDGSSSGSGSGSDSDSDSDGESGSDAEKKAEA. The segment covering 665-678 has biased composition (low complexity); the sequence is SDDGSSSGSGSGSD. Residues 679–689 are compositionally biased toward acidic residues; sequence SDSDSDGESGS. In terms of domain architecture, MI spans 710–826; it reads ALRRTIYLTI…SWDVLECIQL (117 aa). The tract at residues 926 to 1330 is disordered; it reads FRDGSAPAGN…RSSRRSKGRS (405 aa). Low complexity predominate over residues 941–951; it reads SSSSSSSSSSD. Positions 952–963 are enriched in acidic residues; that stretch reads TDSEDSSEEDSS. The segment covering 964–976 has biased composition (low complexity); it reads SDSSSESSSSDSS. Residues 980-1012 are compositionally biased toward basic residues; it reads KKKRKRKDKDKKKSKKATKEKSKKTKNKKKKKK. A compositionally biased stretch (basic and acidic residues) spans 1013-1033; sequence AEKEQEKEKEKQRKSKKEKEK. Positions 1034–1054 are enriched in basic residues; the sequence is DKKRKKEEKKAAKKKSKHRRK. The span at 1072–1082 shows a compositional bias: low complexity; the sequence is SESSDSSNSSS. The segment covering 1089-1110 has biased composition (basic and acidic residues); sequence PQAKIKRQEHVEKNKFRGRTQD. Thr-1108 is subject to Phosphothreonine. Phosphoserine occurs at positions 1111, 1121, 1180, and 1181. Composition is skewed to basic and acidic residues over residues 1133-1195 and 1203-1320; these read RRRD…VAHD and SRSY…SRRE. Phosphotyrosine is present on Tyr-1182. A compositionally biased stretch (basic residues) spans 1321–1330; that stretch reads RSSRRSKGRS.

This sequence belongs to the CWC22 family. Component of the spliceosome C complex. Interacts with eIF4AIII.

It localises to the nucleus speckle. Functionally, required for pre-mRNA splicing and for exon-junction complex (EJC) assembly. Hinders eIF4AIII from non-specifically binding RNA and escorts it to the splicing machinery to promote EJC assembly on mature mRNAs. This Drosophila melanogaster (Fruit fly) protein is Pre-mRNA-splicing factor CWC22 homolog (ncm).